Consider the following 513-residue polypeptide: GMP synthase [glutamine-hydrolyzing] (513 aa).

The Glutamine amidotransferase type-1 domain occupies 9 to 198 (LILVLDFGSQ…VRRVCECKGQ (190 aa)). The active-site Nucleophile is Cys86. Residues His172 and Glu174 contribute to the active site. Residues 199 to 388 (WTMENFIEIE…LGIPEHLVWR (190 aa)) enclose the GMPS ATP-PPase domain. 226 to 232 (SGGVDSS) is an ATP binding site.

In terms of assembly, homodimer.

It catalyses the reaction XMP + L-glutamine + ATP + H2O = GMP + L-glutamate + AMP + diphosphate + 2 H(+). The protein operates within purine metabolism; GMP biosynthesis; GMP from XMP (L-Gln route): step 1/1. Catalyzes the synthesis of GMP from XMP. This chain is GMP synthase [glutamine-hydrolyzing], found in Staphylococcus aureus (strain MSSA476).